Consider the following 82-residue polypeptide: Myosin light chain alkali (82 aa).

Residues 7-42 (GCYEDFIECLKLYDKEENGTMMLAELQHALLALGES) form the EF-hand domain.

Myosin is a hexamer of 2 heavy chains and 4 light chains.

The chain is Myosin light chain alkali (Mlc1) from Drosophila mauritiana (Fruit fly).